The sequence spans 358 residues: tRNA-specific 2-thiouridylase MnmA (358 aa).

ATP is bound by residues 7 to 14 (AMSGGVDS) and Leu33. Cys101 functions as the Nucleophile in the catalytic mechanism. A disulfide bridge links Cys101 with Cys197. Gly125 provides a ligand contact to ATP. The interval 147 to 149 (KDQ) is interaction with tRNA. Cys197 (cysteine persulfide intermediate) is an active-site residue.

The protein belongs to the MnmA/TRMU family.

It localises to the cytoplasm. The enzyme catalyses S-sulfanyl-L-cysteinyl-[protein] + uridine(34) in tRNA + AH2 + ATP = 2-thiouridine(34) in tRNA + L-cysteinyl-[protein] + A + AMP + diphosphate + H(+). Its function is as follows. Catalyzes the 2-thiolation of uridine at the wobble position (U34) of tRNA, leading to the formation of s(2)U34. The polypeptide is tRNA-specific 2-thiouridylase MnmA (Rickettsia prowazekii (strain Madrid E)).